A 511-amino-acid chain; its full sequence is MKKRALVSVSDKTGVVEFVKGLLEQGIEVISTGGTKKLLEENGLQVIGISEVTGFPEIMDGRVKTLHPNIHGGLLAVRDNETHVTQMNELGIEPIDFVVVNLYPFKETIAKPDVTFADAIENIDIGGPTMIRSAAKNHKFVSVIVDPVDYDIVLAELKENGEVAEETKRKLAAKVFRHTAAYDALISNYLTEQMGEESPETLTVTFEKKQDLRYGENPHQKATFYKAPFAATSSVAYAEQLHGKELSYNNINDADAALSIVKEFTEPAVVAVKHMNPCGVGVGTNIHEAYTRAYEADPVSIFGGIIAANREIDKATAEKLHEIFLEIVIAPSFSQEALEVLQSKKNLRLLTINIEKATSASKKLTSVQGGLLVQEEDTLSLDESTISIPTKREPSEQEWKDLKLAWKVVKHVKSNAIVLAKDDMTIGVGAGQMNRVGSAKIAITQAGEKAQGSALASDAFFPMPDTLEEAAKAGITAIIQPGGSIRDEDSIKVADTYGIAMVFTGVRHFKH.

The MGS-like domain maps to 1 to 145 (MKKRALVSVS…KNHKFVSVIV (145 aa)).

Belongs to the PurH family.

It carries out the reaction (6R)-10-formyltetrahydrofolate + 5-amino-1-(5-phospho-beta-D-ribosyl)imidazole-4-carboxamide = 5-formamido-1-(5-phospho-D-ribosyl)imidazole-4-carboxamide + (6S)-5,6,7,8-tetrahydrofolate. It catalyses the reaction IMP + H2O = 5-formamido-1-(5-phospho-D-ribosyl)imidazole-4-carboxamide. The protein operates within purine metabolism; IMP biosynthesis via de novo pathway; 5-formamido-1-(5-phospho-D-ribosyl)imidazole-4-carboxamide from 5-amino-1-(5-phospho-D-ribosyl)imidazole-4-carboxamide (10-formyl THF route): step 1/1. Its pathway is purine metabolism; IMP biosynthesis via de novo pathway; IMP from 5-formamido-1-(5-phospho-D-ribosyl)imidazole-4-carboxamide: step 1/1. This Bacillus cereus (strain B4264) protein is Bifunctional purine biosynthesis protein PurH.